Reading from the N-terminus, the 357-residue chain is Malonyl CoA reductase (NADP) (357 aa).

Threonine 13–valine 16 contacts NADP(+). Cysteine 150 functions as the Acyl-thioester intermediate in the catalytic mechanism. Residue serine 180–glycine 181 coordinates NADP(+). The Proton acceptor role is filled by histidine 245. Asparagine 332–threonine 333 contributes to the NADP(+) binding site.

This sequence belongs to the aspartate-semialdehyde dehydrogenase family. As to quaternary structure, homotetramer.

The enzyme catalyses 3-oxopropanoate + NADP(+) + CoA = malonyl-CoA + NADPH + H(+). Catalyzes the reduction of malonyl-CoA to malonate semialdehyde, a key step in the 3-hydroxypropanoate and the 3-hydroxypropanoate/4-hydroxybutyrate cycles. The protein is Malonyl CoA reductase (NADP) of Metallosphaera sedula (strain ATCC 51363 / DSM 5348 / JCM 9185 / NBRC 15509 / TH2).